Reading from the N-terminus, the 194-residue chain is Putative 3-methyladenine DNA glycosylase (194 aa).

The protein belongs to the DNA glycosylase MPG family.

The chain is Putative 3-methyladenine DNA glycosylase from Chlamydia felis (strain Fe/C-56) (Chlamydophila felis).